The following is a 605-amino-acid chain: Endonuclease 8-like 3 (605 aa).

Val2 acts as the Schiff-base intermediate with DNA; via amino nitrogen in catalysis. Asn192 and Arg271 together coordinate DNA. The FPG-type zinc-finger motif lies at 247–281 (KVYKRPNCGQCHCRITVCRFGDNNRMTYFCPHCQK). The RanBP2-type zinc-finger motif lies at 317-346 (SEEHWTCVVCTLINKPSSKACDACLTSRPI). Ser450 is modified (phosphoserine). Positions 456-477 (ESKLFSPAHKKPKTAQYSSPEL) are disordered. Zn(2+)-binding residues include Cys507, His510, Cys533, Cys541, Cys554, His556, Cys579, and Cys587. 2 GRF-type zinc fingers span residues 507 to 550 (CSKH…ADLS) and 554 to 596 (CNHG…AENG).

The protein belongs to the FPG family. Expressed in keratinocytes and embryonic fibroblasts (at protein level). Also detected in thymus, testis and fetal lung primary fibroblasts.

It is found in the nucleus. Its subcellular location is the chromosome. The enzyme catalyses 2'-deoxyribonucleotide-(2'-deoxyribose 5'-phosphate)-2'-deoxyribonucleotide-DNA = a 3'-end 2'-deoxyribonucleotide-(2,3-dehydro-2,3-deoxyribose 5'-phosphate)-DNA + a 5'-end 5'-phospho-2'-deoxyribonucleoside-DNA + H(+). In terms of biological role, DNA glycosylase which prefers single-stranded DNA (ssDNA), or partially ssDNA structures such as bubble and fork structures, to double-stranded DNA (dsDNA). Mediates interstrand cross-link repair in response to replication stress: acts by mediating DNA glycosylase activity, cleaving one of the two N-glycosyl bonds comprising the interstrand cross-link, which avoids the formation of a double-strand break but generates an abasic site that is bypassed by translesion synthesis polymerases. In vitro, displays strong glycosylase activity towards the hydantoin lesions spiroiminodihydantoin (Sp) and guanidinohydantoin (Gh) in both ssDNA and dsDNA; also recognizes FapyA, FapyG, 5-OHU, 5-OHC, 5-OHMH, Tg and 8-oxoA lesions in ssDNA. No activity on 8-oxoG detected. Also shows weak DNA-(apurinic or apyrimidinic site) lyase activity. In vivo, appears to be the primary enzyme involved in removing Sp and Gh from ssDNA in neonatal tissues. The chain is Endonuclease 8-like 3 (NEIL3) from Homo sapiens (Human).